The following is a 354-amino-acid chain: Trans-enoyl reductase pydC (354 aa).

The region spanning 16 to 342 is the Enoyl reductase (ER) domain; the sequence is ANTDPVTFEI…RREVSGEKIV (327 aa). NADP(+)-binding positions include 51 to 54, 180 to 183, Tyr-198, 245 to 246, and 336 to 337; these read CDYK, SPKN, FE, and VS.

This sequence belongs to the zinc-containing alcohol dehydrogenase family. In terms of assembly, monomer.

It participates in mycotoxin biosynthesis. Functionally, trans-enoyl reductase; part of the gene cluster that mediates the biosynthesis of pyrrocidines, fungal natural products containing a macrocyclic para-cyclophane connected to a decahydrofluorene ring system that show potent antibiotic activities toward Gram-negative bacteria. Within the pathway, the PKS-NRPS pydA, with the help of the trans-enoyl reductase pydC, synthesize the polyketide-tyrosyl acyl thioester product which can be reductively off-loaded by the terminal reductase (R) domain in pydA. The PKS module of pydA acts in combination with the trans-acting enoyl reductase pydC to produce a methylated polyketide attached to the ACP domain. In parallel, the adenylation (A) domain of the NRPS module activated L-tyrosine, which is then transferred to the ACP domain. The condensation (C) domain subsequently link this group to the polyketide chain, forming an enzyme-bound amide. The alpha/beta hydrolase pydG is then required to catalyze the subsequent Knoevenagel condensation that affords the 3-pyrrolin-2-one ring, whereas the four proteins pydB, pydE, pydX and pydZ then function synergistically to form the cyclophane. PydB and the membrane-bound pydX and pydZ are lipid-binding proteins that can sequester and mold the pdyG product into the inverse S-shape. Binding of the medium chain reductase pydE to the complex would trigger the cascade oxidative cyclization. PydY is involved in the Diels-Alder cycloaddition that forms the decahydrofluorene core. Additional non-enzymatic hydroxylation yields pyrrocidine A2 which can be further reduced into pyrrocidine B by an endogenous reductase. The polypeptide is Trans-enoyl reductase pydC (Acremonium sp).